Reading from the N-terminus, the 159-residue chain is MSKPGGHSRHGRRDGIDPVLRSRARRRALQAVYAWQISGGFAKQVIAQFAHEQAHEVADLAYFENLVEGVLSNRAELDTALTPYLDRSVEEVDAIERAVLRLAAYELLYRQDVPYRVVINEAIETAKRFGSEHGHTYVNGVLDRAAVEWRKVESGASGA.

This sequence belongs to the NusB family.

Its function is as follows. Involved in transcription antitermination. Required for transcription of ribosomal RNA (rRNA) genes. Binds specifically to the boxA antiterminator sequence of the ribosomal RNA (rrn) operons. The chain is Transcription antitermination protein NusB from Xanthomonas axonopodis pv. citri (strain 306).